Here is a 76-residue protein sequence, read N- to C-terminus: uncharacterized protein (76 aa).

2 consecutive EF-hand domains span residues Glu-9 to Asn-44 and Glu-43 to Ser-76.

It localises to the cytoplasm. The protein localises to the nucleus. This is an uncharacterized protein from Schizosaccharomyces pombe (strain 972 / ATCC 24843) (Fission yeast).